Reading from the N-terminus, the 462-residue chain is Metal cation symporter ZIP8 (462 aa).

Positions 1–19 (MAPGRAVAGLLLLAATGLG) are cleaved as a signal peptide. Residues 20–132 (RPSEGPELAF…PSFSEVWGYG (113 aa)) lie on the Extracellular side of the membrane. Residues asparagine 40, asparagine 88, and asparagine 96 are each glycosylated (N-linked (GlcNAc...) asparagine). A helical transmembrane segment spans residues 133 to 153 (FLSVTIINLASLLGLILTPLI). At 154–160 (KKSYFPK) the chain is on the cytoplasmic side. A helical membrane pass occupies residues 161-181 (ILTYFVGLAIGTLFSNAIFQL). At 182-191 (IPEAFGFNPK) the chain is on the extracellular side. The helical transmembrane segment at 192 to 212 (IDNYVEKAVAVFGGFYMLFFV) threads the bilayer. At 213 to 367 (ERTLKMLLKT…LNAGMSTRQA (155 aa)) the chain is on the cytoplasmic side. The short motif at 345–350 (EEFPHE) is the XEXPHE-motif element. A helical membrane pass occupies residues 368-388 (LLFNFLSACSCYVGLAFGILV). Residues 389–390 (GN) are Extracellular-facing. A helical transmembrane segment spans residues 391-411 (NFAPNIIFALAGGMFLYISLA). Residues 412 to 431 (DMFPEMNDMLREKVTGRQTD) are Cytoplasmic-facing. A helical transmembrane segment spans residues 432–452 (FTFFMIQNAGMLTGFTAILLI). Topologically, residues 453 to 462 (TLYAGDIELQ) are extracellular.

It belongs to the ZIP transporter (TC 2.A.5) family. As to quaternary structure, homodimer. In terms of processing, N-glycosylated. N-glycosylation is not required for proper iron and zinc transport.

It localises to the cell membrane. The protein localises to the lysosome membrane. It is found in the apical cell membrane. The protein resides in the basolateral cell membrane. It carries out the reaction Zn(2+)(out) + 2 hydrogencarbonate(out) = Zn(2+)(in) + 2 hydrogencarbonate(in). The catalysed reaction is selenite(out) + Zn(2+)(out) + hydrogencarbonate(out) = selenite(in) + Zn(2+)(in) + hydrogencarbonate(in). It catalyses the reaction Mn(2+)(out) + 2 hydrogencarbonate(out) = Mn(2+)(in) + 2 hydrogencarbonate(in). The enzyme catalyses Fe(2+)(out) + 2 hydrogencarbonate(out) = Fe(2+)(in) + 2 hydrogencarbonate(in). It carries out the reaction Cd(2+)(out) + 2 hydrogencarbonate(out) = Cd(2+)(in) + 2 hydrogencarbonate(in). The catalysed reaction is Co(2+)(out) + 2 hydrogencarbonate(out) = Co(2+)(in) + 2 hydrogencarbonate(in). In terms of biological role, electroneutral divalent metal cation:bicarbonate symporter of the plasma membrane mediating the cellular uptake of zinc and manganese, two divalent metal cations important for development, tissue homeostasis and immunity. Transports an electroneutral complex composed of a divalent metal cation and two bicarbonate anions or alternatively a bicarbonate and a selenite anion. Thereby, it also contributes to the cellular uptake of selenium, an essential trace metal and micronutrient. Also imports cadmium a non-essential metal which is cytotoxic and carcinogenic. May also transport iron and cobalt through membranes. Through zinc import, indirectly regulates the metal-dependent transcription factor MTF1 and the expression of some metalloproteases involved in cartilage catabolism and also probably heart development. Also indirectly regulates the expression of proteins involved in cell morphology and cytoskeleton organization. Indirectly controls innate immune function and inflammatory response by regulating zinc cellular uptake which in turn modulates the expression of genes specific of these processes. Protects, for instance, cells from injury and death at the onset of inflammation. By regulating zinc influx into monocytes also directly modulates their adhesion to endothelial cells and arteries. Reclaims manganese from the bile at the apical membrane of hepatocytes, thereby regulating the activity of the manganese-dependent enzymes through the systemic levels of the nutrient. Also participates in manganese reabsorption in the proximal tubule of the kidney. By mediating the extracellular uptake of manganese by cells of the blood-brain barrier, may also play a role in the transport of the micronutrient to the brain. With manganese cellular uptake also participates in mitochondrial proper function. Finally, also probably functions intracellularly, translocating zinc from lysosome to cytosol to indirectly enhance the expression of specific genes during TCR-mediated T cell activation. The sequence is that of Metal cation symporter ZIP8 from Rattus norvegicus (Rat).